A 319-amino-acid polypeptide reads, in one-letter code: 4-diphosphocytidyl-2-C-methyl-D-erythritol kinase (319 aa).

Lys18 is an active-site residue. 103-113 contributes to the ATP binding site; it reads PIGAGLAGGST. The active site involves Asp145.

It belongs to the GHMP kinase family. IspE subfamily.

The enzyme catalyses 4-CDP-2-C-methyl-D-erythritol + ATP = 4-CDP-2-C-methyl-D-erythritol 2-phosphate + ADP + H(+). Its pathway is isoprenoid biosynthesis; isopentenyl diphosphate biosynthesis via DXP pathway; isopentenyl diphosphate from 1-deoxy-D-xylulose 5-phosphate: step 3/6. In terms of biological role, catalyzes the phosphorylation of the position 2 hydroxy group of 4-diphosphocytidyl-2C-methyl-D-erythritol. This Prochlorococcus marinus (strain NATL2A) protein is 4-diphosphocytidyl-2-C-methyl-D-erythritol kinase.